A 171-amino-acid polypeptide reads, in one-letter code: 3-hydroxydecanoyl-[acyl-carrier-protein] dehydratase (171 aa).

The active site involves His-70.

It belongs to the thioester dehydratase family. FabA subfamily. In terms of assembly, homodimer.

It localises to the cytoplasm. It carries out the reaction a (3R)-hydroxyacyl-[ACP] = a (2E)-enoyl-[ACP] + H2O. The enzyme catalyses (3R)-hydroxydecanoyl-[ACP] = (2E)-decenoyl-[ACP] + H2O. The catalysed reaction is (2E)-decenoyl-[ACP] = (3Z)-decenoyl-[ACP]. It participates in lipid metabolism; fatty acid biosynthesis. Its function is as follows. Necessary for the introduction of cis unsaturation into fatty acids. Catalyzes the dehydration of (3R)-3-hydroxydecanoyl-ACP to E-(2)-decenoyl-ACP and then its isomerization to Z-(3)-decenoyl-ACP. Can catalyze the dehydratase reaction for beta-hydroxyacyl-ACPs with saturated chain lengths up to 16:0, being most active on intermediate chain length. This Shewanella sediminis (strain HAW-EB3) protein is 3-hydroxydecanoyl-[acyl-carrier-protein] dehydratase.